A 236-amino-acid chain; its full sequence is Eukaryotic translation initiation factor 3 subunit J (236 aa).

Residues 1–86 (MADDWESAAD…KEEEEQKRLA (86 aa)) form a disordered region. Residues 28–46 (GEDDDEDVKESWEDEEEKK) show a composition bias toward acidic residues. 2 stretches are compositionally biased toward basic and acidic residues: residues 47 to 58 (DEEKPTKTEAPV) and 68 to 86 (AKLE…KRLA). Residues 61–115 (KPNKALKAKLEEQERLKEEEEQKRLAEMTPEEKLAEKLRLQKIQEESDLKSALET) adopt a coiled-coil conformation.

It belongs to the eIF-3 subunit J family. In terms of assembly, component of the eukaryotic translation initiation factor 3 (eIF-3) complex. The eIF-3 complex interacts with pix.

It is found in the cytoplasm. Its function is as follows. Component of the eukaryotic translation initiation factor 3 (eIF-3) complex, which is involved in protein synthesis of a specialized repertoire of mRNAs and, together with other initiation factors, stimulates binding of mRNA and methionyl-tRNAi to the 40S ribosome. The eIF-3 complex specifically targets and initiates translation of a subset of mRNAs involved in cell proliferation. The protein is Eukaryotic translation initiation factor 3 subunit J of Drosophila mojavensis (Fruit fly).